The chain runs to 366 residues: Protein-glutamate methylesterase/protein-glutamine glutaminase 2 (366 aa).

The Response regulatory domain maps to 3 to 119 (RLLIADDSAL…SLELDRLRPL (117 aa)). Asp-53 bears the 4-aspartylphosphate mark. The disordered stretch occupies residues 149-168 (AASSPRAKAARRGAARQRAK). Over residues 156–166 (KAARRGAARQR) the composition is skewed to basic residues. A CheB-type methylesterase domain is found at 171–363 (PAPGLVLIGT…AAVIEWGNAD (193 aa)). Catalysis depends on residues Ser-181, His-208, and Asp-305.

This sequence belongs to the CheB family. Phosphorylated by CheA. Phosphorylation of the N-terminal regulatory domain activates the methylesterase activity.

It localises to the cytoplasm. It catalyses the reaction [protein]-L-glutamate 5-O-methyl ester + H2O = L-glutamyl-[protein] + methanol + H(+). The enzyme catalyses L-glutaminyl-[protein] + H2O = L-glutamyl-[protein] + NH4(+). Functionally, involved in chemotaxis. Part of a chemotaxis signal transduction system that modulates chemotaxis in response to various stimuli. Catalyzes the demethylation of specific methylglutamate residues introduced into the chemoreceptors (methyl-accepting chemotaxis proteins or MCP) by CheR. Also mediates the irreversible deamidation of specific glutamine residues to glutamic acid. The sequence is that of Protein-glutamate methylesterase/protein-glutamine glutaminase 2 from Rhodopseudomonas palustris (strain BisB18).